The sequence spans 1163 residues: Voltage-gated inwardly rectifying potassium channel KCNH2 (1163 aa).

Over 1-405 (MPVRRGHVAP…RIHRWTILHY (405 aa)) the chain is Cytoplasmic. A PAS domain is found at 17-88 (TIIRKFEGQS…AAQIAQALLG (72 aa)). One can recognise a PAC domain in the interval 92–144 (RKVEIAFYRKDGSCFLCLVDVVPVKNEDGAVIMFILNFEVVMEKDMVGSPAHD). The interval 235-286 (VGPASASPVASIPGPHPSPRAQSLNPDASGSSCSLARTRSRESCASVRRASS) is disordered. A phosphoserine mark is found at serine 239 and serine 245. Over residues 254 to 271 (RAQSLNPDASGSSCSLAR) the composition is skewed to polar residues. Phosphoserine occurs at positions 285, 286, 322, and 353. A helical membrane pass occupies residues 406-426 (SPFKAVWDWLILLLVIYTAVF). Over 427–452 (TPYSAAFLLKETEDGSQAPDCGYACQ) the chain is Extracellular. Residues 453–473 (PLAVVDLLVDIMFIVDILINF) form a helical membrane-spanning segment. Over 474-497 (RTTYVNANEEVVSHPGRIAVHYFK) the chain is Cytoplasmic. The helical transmembrane segment at 498–518 (GWFLIDMVAAIPFDLLIFGSG) threads the bilayer. Topologically, residues 519–522 (SEEL) are extracellular. Residues 523-543 (IGLLKTARLLRLVRVARKLDR) traverse the membrane as a helical; Voltage-sensor segment. At 544-549 (YSEYGA) the chain is on the cytoplasmic side. A helical membrane pass occupies residues 550 to 570 (AVLFLLMCTFALIAHWLACIW). The Extracellular portion of the chain corresponds to 571–613 (YAIGNMEQPHMDSHIGWLHNLGDQIGKPYNSSGLGGPSIKDKY). Asparagine 600 is a glycosylation site (N-linked (GlcNAc...) asparagine). An intramembrane region (pore-forming) is located at residues 614-634 (VTALYFTFSSLTSVGFGNVSP). The short motif at 626-631 (SVGFGN) is the Selectivity filter element. At 635-640 (NTNSEK) the chain is on the extracellular side. A helical membrane pass occupies residues 641–661 (IFSICVMLIGSLMYASIFGNV). Topologically, residues 662-1163 (SAIIQRLYSG…LHRHGSDPGS (502 aa)) are cytoplasmic. Residues 744-844 (PFRGATKGCL…IHRDDLLEVL (101 aa)) are cNMP-binding domain. 2 positions are modified to phosphoserine: serine 873 and serine 876. Disordered stretches follow at residues 873–992 (SPSS…NPLS), 1015–1043 (ELPR…GDVE), and 1126–1163 (AGAP…DPGS). A compositionally biased stretch (basic residues) spans 885–894 (RQRKRKLSFR). The segment covering 932–943 (GESPSSGPSSPE) has biased composition (low complexity). An Omega-N-methylarginine modification is found at arginine 1018. Positions 1039–1066 (RGDVESRLDALQRQLNRLETRLSADMAT) form a coiled coil. The residue at position 1141 (serine 1141) is a Phosphoserine.

The protein belongs to the potassium channel family. H (Eag) (TC 1.A.1.20) subfamily. Kv11.1/KCNH2 sub-subfamily. As to quaternary structure, the potassium channel is probably composed of a homo- or heterotetrameric complex of pore-forming alpha subunits that can associate with modulating beta subunits. Interacts with DNAJB12 and DNAJB14; chaperones DNAJB12 and DNAJB14 promote tetramerization. Heteromultimer with KCNH6/ERG2 and KCNH7/ERG3. Interacts with ALG10B. Forms a stable complex with KCNE1 or KCNE2, and that this heteromultimerization regulates Inward rectifier potassium channel activity. Interacts with CANX. The core-glycosylated, but not the fully glycosylated form interacts with RNF207. Interacts with NDFIP1 and NDFIP2; this interaction decreases the cell membrane expression by targeting KCNH2, through interaction with NEDD4L, for the degradation through the multivesicular bodies (MVBs)-lysosomal pathway. Phosphorylated on serine and threonine residues. Phosphorylation by PKA inhibits ion conduction. Highly expressed in brain and testis, slightly less so in heart, adrenal, retina and thymus. Detected at lower levels in lung, soleus, tibialis, and at very low levels in cornea and lens. A shorter transcript is detected in skeletal muscle. Found in pituitary.

The protein resides in the cell membrane. It carries out the reaction K(+)(in) = K(+)(out). Its function is as follows. Pore-forming (alpha) subunit of voltage-gated inwardly rectifying potassium channel. Characterized by unusual gating kinetics by producing relatively small outward currents during membrane depolarization and large inward currents during subsequent repolarization which reflect a rapid inactivation during depolarization and quick recovery from inactivation but slow deactivation (closing) during repolarization. Channel properties are modulated by cAMP and subunit assembly. Forms a stable complex with KCNE1 or KCNE2, and that this heteromultimerization regulates inward rectifier potassium channel activity. In Rattus norvegicus (Rat), this protein is Voltage-gated inwardly rectifying potassium channel KCNH2.